The chain runs to 429 residues: Adenylosuccinate synthetase (429 aa).

GTP is bound by residues 12 to 18 and 40 to 42; these read GDEGKGK and GHT. Catalysis depends on aspartate 13, which acts as the Proton acceptor. Mg(2+)-binding residues include aspartate 13 and glycine 40. IMP-binding positions include 13-16, 38-41, threonine 129, arginine 143, glutamine 223, threonine 238, and arginine 302; these read DEGK and NAGH. Residue histidine 41 is the Proton donor of the active site. Substrate is bound at residue 298–304; sequence VVTGRKR. Residues arginine 304, 330–332, and 412–414 each bind GTP; these read KLD and STS.

Belongs to the adenylosuccinate synthetase family. As to quaternary structure, homodimer. Mg(2+) serves as cofactor.

It localises to the cytoplasm. It catalyses the reaction IMP + L-aspartate + GTP = N(6)-(1,2-dicarboxyethyl)-AMP + GDP + phosphate + 2 H(+). It functions in the pathway purine metabolism; AMP biosynthesis via de novo pathway; AMP from IMP: step 1/2. Functionally, plays an important role in the de novo pathway of purine nucleotide biosynthesis. Catalyzes the first committed step in the biosynthesis of AMP from IMP. This chain is Adenylosuccinate synthetase, found in Brucella abortus (strain 2308).